Reading from the N-terminus, the 511-residue chain is Probable G-protein coupled receptor 101 (511 aa).

Topologically, residues 1-35 are extracellular; that stretch reads MPPSCTNSTQENNGSRVCLPLSKMPISVAHGIIRS. N7 and N13 each carry an N-linked (GlcNAc...) asparagine glycan. The helical transmembrane segment at 36 to 56 threads the bilayer; it reads VVLLVILGVAFLGNVVLGYVL. Residues 57–67 lie on the Cytoplasmic side of the membrane; sequence HRKPNLLQVTN. The chain crosses the membrane as a helical span at residues 68 to 90; that stretch reads RFIFNLLVTDLLQVALVAPWVVS. The Extracellular segment spans residues 91-106; the sequence is TAIPFFWPLNIHFCTA. A disulfide bond links C104 and C182. The helical transmembrane segment at 107-127 threads the bilayer; it reads LVSLTHLFAFASVNTIVVVSV. The Cytoplasmic segment spans residues 128–149; sequence DRYLTIIHPLSYPSKMTNRRSY. Residues 150 to 170 form a helical membrane-spanning segment; it reads ILLYGTWIAAFLQSTPPLYGW. Topologically, residues 171–196 are extracellular; the sequence is GHATFDDRNAFCSMIWGASPAYTVVS. A helical transmembrane segment spans residues 197–217; it reads VVSFLVIPLGVMIACYSVVFG. Residues 218–398 lie on the Cytoplasmic side of the membrane; that stretch reads AARRQQALLY…PPCYECKAAR (181 aa). The span at 240–261 shows a compositional bias: basic and acidic residues; sequence DSVVHENEEGAKKRDEFQDKNE. Disordered regions lie at residues 240–315 and 367–386; these read DSVV…EVSN and EAMR…TSDP. Residues 376 to 385 are compositionally biased toward polar residues; sequence PPSRRNSTSD. Residues 399 to 419 traverse the membrane as a helical segment; the sequence is VIFVIISTYVLSLGPYCFLAV. At 420–432 the chain is on the extracellular side; that stretch reads LAVWVDIDTRVPQ. A helical membrane pass occupies residues 433–453; it reads WVITIIIWLFFLQCCIHPYVY. At 454–511 the chain is on the cytoplasmic side; sequence GYMHKSIKKEIQEVLKKLICKKSPPVEDSHPDLHETEAGTEGGIEGKAVPSHDSATSP. The interval 476-511 is disordered; sequence SPPVEDSHPDLHETEAGTEGGIEGKAVPSHDSATSP. The segment covering 477–490 has biased composition (basic and acidic residues); sequence PPVEDSHPDLHETE.

This sequence belongs to the G-protein coupled receptor 1 family. In terms of tissue distribution, expressed in the brain in hypothalamus.

The protein localises to the cell membrane. In terms of biological role, orphan receptor. This is Probable G-protein coupled receptor 101 (Gpr101) from Mus musculus (Mouse).